A 351-amino-acid polypeptide reads, in one-letter code: Protein EXPRESSION OF TERPENOIDS 1 (351 aa).

The interval 1–23 (MANFFSLGGNQEQQHQEISSSQA) is disordered. Positions 11-22 (QEQQHQEISSSQ) are enriched in low complexity. Residues Cys129, Cys132, Cys140, Cys145, Cys149, and Cys156 each contribute to the Zn(2+) site. Residues 129 to 156 (CQDCGNQAKKDCQHMRCRTCCKSRGFQC) constitute a DNA-binding region (zn(2)-C6 fungal-type; degenerate). Residues 170 to 219 (RRERQQQLAALQQQQQGHNNNNNNHKNKRQREDPSASSLVSTRLPSNTNG) form a disordered region. The span at 175 to 193 (QQLAALQQQQQGHNNNNNN) shows a compositional bias: low complexity. Over residues 204–219 (SASSLVSTRLPSNTNG) the composition is skewed to polar residues. The short motif at 258–261 (IGGH) is the Required for homo- and heterodimerization element. The tract at residues 286-320 (TSSGGSAGGVQHHHHNSAAVATATTTSGGDATAAG) is disordered. Positions 303–320 (AAVATATTTSGGDATAAG) are enriched in low complexity.

This sequence belongs to the SHI protein family. In terms of assembly, forms homodimers and heterodimers with LRP1.

It localises to the nucleus. In terms of biological role, transcription activator involved in the transcriptional regulation of terpene biosynthesis in glandular trichomes. Binds to the promoter of the linalool synthase TPS5 and promotes TPS5 gene transactivation. Acts synergistically with MYC1 in the transactivation of TPS5. This chain is Protein EXPRESSION OF TERPENOIDS 1, found in Solanum lycopersicum (Tomato).